The following is a 121-amino-acid chain: Outer membrane lipoprotein BBA14 (121 aa).

Residues 1-19 (MQIKNFPFLFLLNSLIIFS) form the signal peptide. Cysteine 20 carries N-palmitoyl cysteine lipidation. Residue cysteine 20 is the site of S-diacylglycerol cysteine attachment.

Its subcellular location is the cell outer membrane. In terms of biological role, outer membrane lipoprotein that could act as a component of a potential toxin-antitoxin system in B.burgdorferi which could serve as a plasmid stabilization mechanism in a growing bacterial population. This is Outer membrane lipoprotein BBA14 from Borreliella burgdorferi (strain ATCC 35210 / DSM 4680 / CIP 102532 / B31) (Borrelia burgdorferi).